A 117-amino-acid polypeptide reads, in one-letter code: Large ribosomal subunit protein eL34 (117 aa).

Phosphoserine is present on Ser12. An N6-acetyllysine mark is found at Lys36 and Lys43. A Glycyl lysine isopeptide (Lys-Gly) (interchain with G-Cter in SUMO2) cross-link involves residue Lys108.

The protein belongs to the eukaryotic ribosomal protein eL34 family. In terms of assembly, component of the large ribosomal subunit.

It localises to the cytoplasm. The protein localises to the cytosol. The protein resides in the endoplasmic reticulum. Component of the large ribosomal subunit. The ribosome is a large ribonucleoprotein complex responsible for the synthesis of proteins in the cell. In Rattus norvegicus (Rat), this protein is Large ribosomal subunit protein eL34 (Rpl34).